Here is a 118-residue protein sequence, read N- to C-terminus: Large ribosomal subunit protein bL20 (118 aa).

Belongs to the bacterial ribosomal protein bL20 family.

Binds directly to 23S ribosomal RNA and is necessary for the in vitro assembly process of the 50S ribosomal subunit. It is not involved in the protein synthesizing functions of that subunit. The protein is Large ribosomal subunit protein bL20 of Thermosipho africanus (strain TCF52B).